The chain runs to 238 residues: Small ribosomal subunit protein uS2c (238 aa).

Belongs to the universal ribosomal protein uS2 family.

The protein resides in the plastid. It is found in the chloroplast. This chain is Small ribosomal subunit protein uS2c (rps2), found in Nuphar advena (Common spatterdock).